Here is a 362-residue protein sequence, read N- to C-terminus: MAAVTAAAVSTSAAAAVTKASPSPAHCFLPCPPRTRAAHQRGLLLRAQVSTTDAAAVAAAPAKKEKISKKHDEGVVTNKYRPKEPYVGKCLLNTKITADDAPGETWHMVFSTEGEIPYREGQSIGVIADGVDKNGKPHKLRLYSIASSALGDFGDSKTVSLCVKRLVYTNDQGEIVKGVCSNFLCDLKPGSDVKITGPVGKEMLMPKDPNANIIMLATGTGIAPFRSFLWKMFFEKYDDYKFNGLAWLFLGVPTSSSLLYKEEFDKMKAKAPENFRVDYAVSREQTNAQGEKMYIQTRMAEYKEELWELLKKDNTYVYMCGLKGMEKGIDDIMVSLAAKDGIDWADYKKQLKKGEQWNVEVY.

The N-terminal 36 residues, 1–36 (MAAVTAAAVSTSAAAAVTKASPSPAHCFLPCPPRTR), are a transit peptide targeting the chloroplast. The FAD-binding FR-type domain maps to 83 to 205 (KEPYVGKCLL…TGPVGKEMLM (123 aa)). FAD contacts are provided by residues 141–144 (RLYS), 162–164 (CVK), tyrosine 168, 179–181 (VCS), and threonine 220. The NADP(+) site is built by serine 144 and lysine 164. Cysteine 180 and cysteine 185 are oxidised to a cystine. Serine 181 is modified (phosphoserine). Residues threonine 220, 252–253 (VP), 282–283 (SR), lysine 292, 321–322 (GL), and glutamate 360 each bind NADP(+).

The protein belongs to the ferredoxin--NADP reductase type 1 family. Heterodimer with LFNR2. Component of high molecular weight thylakoid LFNRs-containing protein complexes containing LIR1, LFNR1, LFNR2, TIC62 and TROL proteins. Interacts directly with LFNR1 and LFNR2; LIR1 increases the affinity of LFNR1 and LFNR2 for TIC62 and subsequent thylakoid relocalization. FAD serves as cofactor. Post-translationally, may form interchain disulfide bonds with LIR1.

The protein localises to the plastid. It is found in the chloroplast stroma. Its subcellular location is the chloroplast thylakoid membrane. The catalysed reaction is 2 reduced [2Fe-2S]-[ferredoxin] + NADP(+) + H(+) = 2 oxidized [2Fe-2S]-[ferredoxin] + NADPH. It participates in energy metabolism; photosynthesis. In terms of biological role, plays a key role in regulating the relative amounts of cyclic and non-cyclic electron flow to meet the demands of the plant for ATP and reducing power. This Oryza sativa subsp. indica (Rice) protein is Ferredoxin--NADP reductase, leaf isozyme 1, chloroplastic.